The chain runs to 508 residues: Probable monogalactosyldiacylglycerol synthase 3, chloroplastic (508 aa).

The N-terminal 60 residues, 1–60 (MAASSSSSSSMASPRGRSIRETVLETVAAYHQQQRMRRKFRKSLSYAGELSSAGRARGEG), are a transit peptide targeting the chloroplast. The disordered stretch occupies residues 51–79 (SSAGRARGEGGASSSASTTSLCGPDEDDE).

The protein belongs to the glycosyltransferase 28 family.

It localises to the plastid. The protein resides in the chloroplast membrane. It carries out the reaction a 1,2-diacyl-sn-glycerol + UDP-alpha-D-galactose = a 1,2-diacyl-3-O-(beta-D-galactosyl)-sn-glycerol + UDP + H(+). In terms of biological role, involved in the synthesis of the major structural component of photosynthetic membranes. The sequence is that of Probable monogalactosyldiacylglycerol synthase 3, chloroplastic (MGD3) from Oryza sativa subsp. japonica (Rice).